A 59-amino-acid chain; its full sequence is Venom protein 27.7 (59 aa).

Positions 1–29 are cleaved as a signal peptide; sequence MTFITLTIGLSLRTIFLIFIFLPPPHLLA.

This sequence belongs to the non-disulfide-bridged peptide (NDBP) superfamily. Expressed by the venom gland.

Its subcellular location is the secreted. This is Venom protein 27.7 from Lychas mucronatus (Chinese swimming scorpion).